Consider the following 303-residue polypeptide: Oxygen-dependent coproporphyrinogen-III oxidase (303 aa).

Position 93 (S93) interacts with substrate. Residues H97 and H107 each coordinate a divalent metal cation. The Proton donor role is filled by H107. 109–111 (NVR) lines the substrate pocket. A divalent metal cation is bound by residues H149 and H179. Positions 244–279 (YVEFNLVFDRGTLFGLQSGGRTESILLSMPPLAQWR) are important for dimerization. 262–264 (GGR) provides a ligand contact to substrate.

It belongs to the aerobic coproporphyrinogen-III oxidase family. In terms of assembly, homodimer. Requires a divalent metal cation as cofactor.

The protein resides in the cytoplasm. It catalyses the reaction coproporphyrinogen III + O2 + 2 H(+) = protoporphyrinogen IX + 2 CO2 + 2 H2O. Its pathway is porphyrin-containing compound metabolism; protoporphyrin-IX biosynthesis; protoporphyrinogen-IX from coproporphyrinogen-III (O2 route): step 1/1. In terms of biological role, involved in the heme biosynthesis. Catalyzes the aerobic oxidative decarboxylation of propionate groups of rings A and B of coproporphyrinogen-III to yield the vinyl groups in protoporphyrinogen-IX. This Bordetella parapertussis (strain 12822 / ATCC BAA-587 / NCTC 13253) protein is Oxygen-dependent coproporphyrinogen-III oxidase.